The primary structure comprises 452 residues: Putative zinc metalloprotease VC_2253 (452 aa).

His-22 contacts Zn(2+). The active site involves Glu-23. His-26 lines the Zn(2+) pocket. Residues 98-120 (SAIVSAGPIFNFLFAIFAYWLVF) traverse the membrane as a helical segment. One can recognise a PDZ domain in the interval 197–292 (NLRDWNFDPE…QVELTLIPDS (96 aa)). The next 2 membrane-spanning stretches (helical) occupy residues 378–400 (FVYF…LVPL) and 428–447 (MGYR…AIFN).

This sequence belongs to the peptidase M50B family. The cofactor is Zn(2+).

It localises to the cell inner membrane. This is Putative zinc metalloprotease VC_2253 from Vibrio cholerae serotype O1 (strain ATCC 39315 / El Tor Inaba N16961).